Here is a 449-residue protein sequence, read N- to C-terminus: MSHIKFDYSKVLDKFVAPHEVEYMQSQVTAADELIRKGTGAGSDFLGWLDLPEKYDREEFDRILKAAEQIKSDSDVLVVIGIGGSYLGAKAAIDFLNHHFANLQTKEERKAPQILYAGNSISSTYLADLVEYVADKDFSVNVISKSGTTTEPAIAFRVFKELLVKKYGQEEANKRIYATTDRQKGAVKVEADANGWGTFVVPDDIGGRFSVLTAVGLLSIAASGADIKALMEGANAARKDYTSDKISENEAYQYAAVRNILYRKGYATEILVNYEPSLQYFSEWWKQLAGESEGKDQKGIYPTSANFSTDLHSLGQFIQEGTRIMFETVVRVDKPRKNVLIPTLEEDLDGLGYLQGKDVDFVNKKATDGVLLAHTDGDVPNMYVTLPEQDAFTLGYTIYFFELAIALSGYLNAINPFDQPGVEAYKRNMFALLGKPGFEELSKELNARL.

The active-site Proton donor is the Glu291. Active-site residues include His312 and Lys426.

It belongs to the GPI family.

The protein resides in the cytoplasm. The catalysed reaction is alpha-D-glucose 6-phosphate = beta-D-fructose 6-phosphate. The protein operates within carbohydrate biosynthesis; gluconeogenesis. Its pathway is carbohydrate degradation; glycolysis; D-glyceraldehyde 3-phosphate and glycerone phosphate from D-glucose: step 2/4. Catalyzes the reversible isomerization of glucose-6-phosphate to fructose-6-phosphate. This is Glucose-6-phosphate isomerase from Streptococcus pneumoniae serotype 4 (strain ATCC BAA-334 / TIGR4).